The sequence spans 130 residues: Large ribosomal subunit protein bL12 (130 aa).

It belongs to the bacterial ribosomal protein bL12 family. Homodimer. Part of the ribosomal stalk of the 50S ribosomal subunit. Forms a multimeric L10(L12)X complex, where L10 forms an elongated spine to which 2 to 4 L12 dimers bind in a sequential fashion. Binds GTP-bound translation factors.

Forms part of the ribosomal stalk which helps the ribosome interact with GTP-bound translation factors. Is thus essential for accurate translation. The chain is Large ribosomal subunit protein bL12 from Prochlorococcus marinus (strain SARG / CCMP1375 / SS120).